Reading from the N-terminus, the 967-residue chain is Kinesin-like protein KIF28P (967 aa).

Residues 7–355 enclose the Kinesin motor domain; sequence DSVKAVRVRP…LRYAERERKI (349 aa). 111-118 contributes to the ATP binding site; it reads GQTGSGKS. Residues 410 to 472 enclose the FHA domain; that stretch reads APCPRPALSP…LQHLDRLILG (63 aa). Residues 822 to 851 are a coiled coil; it reads NQIPELYLKLLKLEQETEPLRNINRALREE.

The protein belongs to the TRAFAC class myosin-kinesin ATPase superfamily. Kinesin family.

The protein localises to the mitochondrion membrane. Microtubule-dependent motor protein required for mitochondrion morphology and transport of mitochondria in neuronal cells. The chain is Kinesin-like protein KIF28P (KIF28P) from Homo sapiens (Human).